Reading from the N-terminus, the 381-residue chain is O-antigen chain mannosyltransferase B (381 aa).

This sequence belongs to the glycosyltransferase group 1 family. Glycosyltransferase 4 subfamily.

It carries out the reaction alpha-D-mannosyl-(1-&gt;3)-N-acetyl-alpha-D-glucosaminyl-di-trans,octa-cis-undecaprenyl diphosphate + 2 GDP-alpha-D-mannose = alpha-D-mannosyl-(1-&gt;3)-alpha-D-mannosyl-(1-&gt;3)-alpha-D-mannosyl-(1-&gt;3)-N-acetyl-alpha-D-glucosaminyl-di-trans,octa-cis-undecaprenyl diphosphate + 2 GDP + 2 H(+). It participates in bacterial outer membrane biogenesis; LPS O-antigen biosynthesis. Its function is as follows. Mannosyltransferase involved in the biosynthesis of the repeat unit of the lipopolysaccharide (LPS) O-antigen region. Catalyzes the transfer of two alpha-(1-&gt;3)-linked mannose residues to the product of the WbdC enzyme during the synthesis of the adapter region. The sequence is that of O-antigen chain mannosyltransferase B from Escherichia coli.